The primary structure comprises 223 residues: Imidazoleglycerol-phosphate dehydratase (223 aa).

The protein belongs to the imidazoleglycerol-phosphate dehydratase family.

It carries out the reaction D-erythro-1-(imidazol-4-yl)glycerol 3-phosphate = 3-(imidazol-4-yl)-2-oxopropyl phosphate + H2O. It functions in the pathway amino-acid biosynthesis; L-histidine biosynthesis; L-histidine from 5-phospho-alpha-D-ribose 1-diphosphate: step 6/9. The chain is Imidazoleglycerol-phosphate dehydratase (HIS3) from Candida albicans (Yeast).